Here is a 133-residue protein sequence, read N- to C-terminus: Histone H2A.1 (133 aa).

Residues 1 to 23 (MSTTGKGGKAKGKTASSKQVSRS) are disordered. Serine 2 bears the N-acetylserine mark. N6-acetyllysine is present on residues lysine 6, lysine 9, lysine 11, lysine 13, and lysine 18. A Phosphoserine modification is found at serine 123. A Glycyl lysine isopeptide (Lys-Gly) (interchain with G-Cter in ubiquitin) cross-link involves residue lysine 124.

The protein belongs to the histone H2A family. In terms of assembly, the nucleosome is a histone octamer containing two molecules each of H2A, H2B, H3 and H4 assembled in one H3-H4 heterotetramer and two H2A-H2B heterodimers. The octamer wraps approximately 147 bp of DNA. In terms of processing, monoubiquitination of Lys-124 gives a specific tag for epigenetic transcriptional repression. Post-translationally, acetylation occurs almost exclusively in the MAC.

It localises to the nucleus. Its subcellular location is the chromosome. Core component of nucleosome. Nucleosomes wrap and compact DNA into chromatin, limiting DNA accessibility to the cellular machineries which require DNA as a template. Histones thereby play a central role in transcription regulation, DNA repair, DNA replication and chromosomal stability. DNA accessibility is regulated via a complex set of post-translational modifications of histones, also called histone code, and nucleosome remodeling. The sequence is that of Histone H2A.1 (HTA2) from Tetrahymena thermophila (strain SB210).